The following is a 203-amino-acid chain: MKREGVLYILSAPSGAGKTTLCREIIDIFPQLRHSVSYTTRTPRPGEIHGKDYFFVSMDEFHRMIDADEFAEWAEVHGNCYGTSIRTLEENRAAGVDLILDIDIQGARQLQERFAGGVYIFILPPSFEELRRRLNGRSSDSDEVISRRINAAAGEIRESRWYDYIIVNDQFSRAVEELKSVIIAEQCRTARVLDAVSEIFSMD.

A Guanylate kinase-like domain is found at 5-183 (GVLYILSAPS…AVEELKSVII (179 aa)). 12–19 (APSGAGKT) serves as a coordination point for ATP.

The protein belongs to the guanylate kinase family.

Its subcellular location is the cytoplasm. It catalyses the reaction GMP + ATP = GDP + ADP. Its function is as follows. Essential for recycling GMP and indirectly, cGMP. The sequence is that of Guanylate kinase from Geobacter sulfurreducens (strain ATCC 51573 / DSM 12127 / PCA).